The primary structure comprises 102 residues: Large ribosomal subunit protein bL21 (102 aa).

This sequence belongs to the bacterial ribosomal protein bL21 family. In terms of assembly, part of the 50S ribosomal subunit. Contacts protein L20.

This protein binds to 23S rRNA in the presence of protein L20. In Phytoplasma mali (strain AT), this protein is Large ribosomal subunit protein bL21.